The sequence spans 339 residues: Fructose-1,6-bisphosphatase class 1 (339 aa).

Residues glutamate 101, aspartate 120, leucine 122, and aspartate 123 each coordinate Mg(2+). Substrate-binding positions include 123–126 (DGSS), asparagine 215, and lysine 281. Glutamate 287 contributes to the Mg(2+) binding site.

This sequence belongs to the FBPase class 1 family. In terms of assembly, homotetramer. The cofactor is Mg(2+).

The protein localises to the cytoplasm. The catalysed reaction is beta-D-fructose 1,6-bisphosphate + H2O = beta-D-fructose 6-phosphate + phosphate. Its pathway is carbohydrate biosynthesis; gluconeogenesis. This chain is Fructose-1,6-bisphosphatase class 1, found in Polynucleobacter necessarius subsp. necessarius (strain STIR1).